Here is a 370-residue protein sequence, read N- to C-terminus: 3,7-dimethylxanthine N-methyltransferase CkTbS (370 aa).

Residue Tyr24 participates in S-adenosyl-L-homocysteine binding. Thr31 is a binding site for theobromine. Positions 67, 72, 104, 105, 139, and 140 each coordinate S-adenosyl-L-homocysteine. Theobromine-binding residues include Tyr157, His160, and Trp161. Asn178 is a Mg(2+) binding site. His226 provides a ligand contact to theobromine. The Mg(2+) site is built by Asp264, Phe266, and Asn267. Residue Phe322 coordinates theobromine.

The protein belongs to the methyltransferase superfamily. Type-7 methyltransferase family. Mg(2+) serves as cofactor.

The catalysed reaction is 7-methylxanthine + S-adenosyl-L-methionine = theobromine + S-adenosyl-L-homocysteine + H(+). It participates in alkaloid biosynthesis. Its function is as follows. Involved in the biosynthesis of caffeine in cv. Puer. Involved in the biosynthesis of theacrine in cv. Kucha, a caffeine-like xanthine alkaloid with diverse beneficial biological activities including anti-depressive, sedative, and hypnotic activities, improving learning and memory, increasing exercise activity, and preventing nonalcoholic fatty liver disease. Catalyzes the conversion of 7-methylxanthine (7mX) to theobromine but not able to convert paraxanthine to caffeine. This chain is 3,7-dimethylxanthine N-methyltransferase CkTbS, found in Camellia sinensis var. assamica (Assam tea).